The chain runs to 212 residues: Ribosomal RNA large subunit methyltransferase E (212 aa).

Positions 56, 58, 78, 94, and 117 each coordinate S-adenosyl-L-methionine. Lysine 157 (proton acceptor) is an active-site residue.

The protein belongs to the class I-like SAM-binding methyltransferase superfamily. RNA methyltransferase RlmE family.

It localises to the cytoplasm. It carries out the reaction uridine(2552) in 23S rRNA + S-adenosyl-L-methionine = 2'-O-methyluridine(2552) in 23S rRNA + S-adenosyl-L-homocysteine + H(+). In terms of biological role, specifically methylates the uridine in position 2552 of 23S rRNA at the 2'-O position of the ribose in the fully assembled 50S ribosomal subunit. The sequence is that of Ribosomal RNA large subunit methyltransferase E from Ehrlichia chaffeensis (strain ATCC CRL-10679 / Arkansas).